The chain runs to 276 residues: Beta-lactamase OXA-1 (276 aa).

The first 25 residues, methionine 1 to alanine 25, serve as a signal peptide directing secretion. The Acyl-ester intermediate role is filled by serine 71. The a beta-lactam site is built by serine 71, lysine 74, serine 118, threonine 216, and alanine 218. An N6-carboxylysine modification is found at lysine 74.

It belongs to the class-D beta-lactamase family. Monomer.

It localises to the periplasm. It carries out the reaction a beta-lactam + H2O = a substituted beta-amino acid. With respect to regulation, inhibited by penicillin sulfones. Only weakly inhibited by clavulanic acid and sulbactam. Functionally, class D beta-lactamase which confers resistance to the beta-lactam antibiotics, including amoxicillin and ticarcillin. Acts via hydrolysis of the beta-lactam ring. Has penicillin- and cephalosporin-hydrolyzing activities. The chain is Beta-lactamase OXA-1 from Escherichia coli.